The chain runs to 93 residues: UPF0298 protein GWCH70_0997 (93 aa).

Belongs to the UPF0298 family.

Its subcellular location is the cytoplasm. This chain is UPF0298 protein GWCH70_0997, found in Geobacillus sp. (strain WCH70).